The primary structure comprises 193 residues: 3-isopropylmalate dehydratase small subunit (193 aa).

This sequence belongs to the LeuD family. LeuD type 1 subfamily. In terms of assembly, heterodimer of LeuC and LeuD.

The enzyme catalyses (2R,3S)-3-isopropylmalate = (2S)-2-isopropylmalate. Its pathway is amino-acid biosynthesis; L-leucine biosynthesis; L-leucine from 3-methyl-2-oxobutanoate: step 2/4. Functionally, catalyzes the isomerization between 2-isopropylmalate and 3-isopropylmalate, via the formation of 2-isopropylmaleate. This is 3-isopropylmalate dehydratase small subunit from Listeria innocua serovar 6a (strain ATCC BAA-680 / CLIP 11262).